Here is a 227-residue protein sequence, read N- to C-terminus: Pre-hexon-linking protein VIII (227 aa).

The residue at position 64 (T64) is a Phosphothreonine; by host. Positions 112 to 157 (FRHRVRSPGQGITHLKIRGRGIQLNDESVSSSLGLRPDGTFQIGGA) are excised as a propeptide. A phosphoserine; by host mark is found at S118 and S174.

It belongs to the adenoviridae hexon-linking protein family. In terms of assembly, interacts with the peripentonal hexons as well as the hexons in the facets. Part of a complex composed of the core-capsid bridging protein, the endosome lysis protein VI and the hexon-linking protein VIII; these interactions bridge the virus core to the capsid. Cleaved by the viral protease during virion maturation. May cause the middle segment to be shed from the capsid.

Its subcellular location is the virion. It is found in the host nucleus. Functionally, structural component of the virion that acts as a cement protein on the capsid interior and which glue the peripentonal hexons and group-of-nine hexons together. In Homo sapiens (Human), this protein is Pre-hexon-linking protein VIII.